A 160-amino-acid chain; its full sequence is MGLLGFGGAAAEAAQVATHHTTVLLDHHAGACEAVARAAEKAAEEVAAIKMRLQVIRDAAREHHLTIAYATGTALPPPDLSSYSPADQQAILNTAIRRASNVCWPTPRPPMRIWPRRFDAPPGTCRASRSMPNSAMRHPQCRRCRRRTATLRRSSGGGIR.

This is an uncharacterized protein from Mycobacterium tuberculosis (strain CDC 1551 / Oshkosh).